The following is a 150-amino-acid chain: Large ribosomal subunit protein bL9 (150 aa).

The protein belongs to the bacterial ribosomal protein bL9 family.

Binds to the 23S rRNA. This is Large ribosomal subunit protein bL9 from Delftia acidovorans (strain DSM 14801 / SPH-1).